The following is a 366-amino-acid chain: Chorismate synthase (366 aa).

Positions 48 and 54 each coordinate NADP(+). Residues 125–127 (RSS), 238–239 (NA), Gly-278, 293–297 (KPTSS), and Arg-319 each bind FMN.

It belongs to the chorismate synthase family. In terms of assembly, homotetramer. FMNH2 serves as cofactor.

It carries out the reaction 5-O-(1-carboxyvinyl)-3-phosphoshikimate = chorismate + phosphate. The protein operates within metabolic intermediate biosynthesis; chorismate biosynthesis; chorismate from D-erythrose 4-phosphate and phosphoenolpyruvate: step 7/7. Its function is as follows. Catalyzes the anti-1,4-elimination of the C-3 phosphate and the C-6 proR hydrogen from 5-enolpyruvylshikimate-3-phosphate (EPSP) to yield chorismate, which is the branch point compound that serves as the starting substrate for the three terminal pathways of aromatic amino acid biosynthesis. This reaction introduces a second double bond into the aromatic ring system. The sequence is that of Chorismate synthase from Thiobacillus denitrificans (strain ATCC 25259 / T1).